Reading from the N-terminus, the 744-residue chain is Collagen alpha-1(VIII) chain (744 aa).

An N-terminal signal peptide occupies residues 1 to 27; that stretch reads MAVPPGPPQLLQVLLTISLGSIRLIQA. A nonhelical region (NC2) region spans residues 29–117; that stretch reads AYYGIKPLPP…GKEIPLASLR (89 aa). Residues 101-110 show a composition bias toward basic and acidic residues; the sequence is KEAVPKKGKE. 2 disordered regions span residues 101–435 and 478–584; these read KEAV…GLQG and LLGP…QGEY. Residues 118-571 form a triple-helical region region; that stretch reads GEQGPRGEPG…PGPPGPPGPP (454 aa). The segment covering 128–137 has biased composition (pro residues); sequence PRGPPGPPGL. Low complexity predominate over residues 168–190; it reads KPGAMGMPGAKGEIGPKGEIGPM. The span at 203–217 shows a compositional bias: gly residues; that stretch reads GLPGIGKPGGPGLPG. Pro residues predominate over residues 288-298; it reads KPGPPGEPGPQ. Gly residues predominate over residues 328 to 337; the sequence is GFPGGKGEQG. Residues 389–403 show a composition bias toward pro residues; that stretch reads PGEPGLPGIPGPMGP. Over residues 411–420 the composition is skewed to gly residues; that stretch reads GPKGEGGIVG. 2 stretches are compositionally biased toward low complexity: residues 478–506 and 540–556; these read LLGP…TGPS and LHGP…QGQP. Pro residues predominate over residues 558 to 579; it reads LPGPPGPPGPPGPPAVMPPTPA. The interval 572–744 is nonhelical region (NC1); it reads AVMPPTPAPQ…SFSGYLLYPM (173 aa). In terms of domain architecture, C1q spans 611–744; it reads PAYEMPAFTA…SFSGYLLYPM (134 aa).

As to quaternary structure, homotrimers, or heterotrimers in association with alpha 2(VIII) type collagens. Four homotrimers can form a tetrahedron stabilized by central interacting C-terminal NC1 trimers. In terms of processing, prolines at the third position of the tripeptide repeating unit (G-X-Y) are hydroxylated in some or all of the chains. Proteolytically cleaved by neutrophil elastase, in vitro. Proteolytic processing produces the C-terminal NC1 domain fragment, vastatin.

The protein localises to the secreted. It is found in the extracellular space. The protein resides in the extracellular matrix. It localises to the basement membrane. Its function is as follows. Macromolecular component of the subendothelium. Major component of the Descemet's membrane (basement membrane) of corneal endothelial cells. Also a component of the endothelia of blood vessels. Necessary for migration and proliferation of vascular smooth muscle cells and thus, has a potential role in the maintenance of vessel wall integrity and structure, in particular in atherogenesis. Functionally, vastatin, the C-terminal fragment comprising the NC1 domain, inhibits aortic endothelial cell proliferation and causes cell apoptosis. The chain is Collagen alpha-1(VIII) chain (COL8A1) from Oryctolagus cuniculus (Rabbit).